The chain runs to 502 residues: DnaJ homolog subfamily C member 3 homolog (502 aa).

The signal sequence occupies residues 1 to 25 (MIVNKKYFLLICIIILISINCLVLA). TPR repeat units follow at residues 29 to 62 (IENF…IGSD), 69 to 102 (VSLL…NPDN), 103 to 136 (IHAR…RPDN), 184 to 217 (KEVR…EPSS), 218 to 251 (VAAL…DPDN), 264 to 297 (FEKS…EPNS), 302 to 335 (TPLY…DELN), and 336 to 369 (ADAL…KPND). N-linked (GlcNAc...) asparagine glycosylation occurs at Asn-51. Cys-309 and Cys-325 are disulfide-bonded. Positions 390–457 (DYYKILGIQK…EKRKRYDMGE (68 aa)) constitute a J domain.

The protein resides in the secreted. It localises to the endoplasmic reticulum lumen. Functionally, may be involved in the unfolded protein response (UPR) during ER stress. This Dictyostelium discoideum (Social amoeba) protein is DnaJ homolog subfamily C member 3 homolog (dnajc3).